We begin with the raw amino-acid sequence, 339 residues long: N-acetyl-gamma-glutamyl-phosphate reductase (339 aa).

Cysteine 144 is an active-site residue.

The protein belongs to the NAGSA dehydrogenase family. Type 1 subfamily.

Its subcellular location is the cytoplasm. The catalysed reaction is N-acetyl-L-glutamate 5-semialdehyde + phosphate + NADP(+) = N-acetyl-L-glutamyl 5-phosphate + NADPH + H(+). It participates in amino-acid biosynthesis; L-arginine biosynthesis; N(2)-acetyl-L-ornithine from L-glutamate: step 3/4. Its function is as follows. Catalyzes the NADPH-dependent reduction of N-acetyl-5-glutamyl phosphate to yield N-acetyl-L-glutamate 5-semialdehyde. The chain is N-acetyl-gamma-glutamyl-phosphate reductase from Methanobrevibacter smithii (strain ATCC 35061 / DSM 861 / OCM 144 / PS).